Consider the following 132-residue polypeptide: Myelin P2 protein (132 aa).

Ser-2 carries the N-acetylserine modification. Residue Arg-107 participates in (9Z)-octadecenoate binding. Arg-107 contributes to the hexadecanoate binding site. Cys-118 and Cys-125 are joined by a disulfide. 127 to 129 is a binding site for (9Z)-octadecenoate; sequence RIY. 127 to 129 provides a ligand contact to hexadecanoate; sequence RIY.

The protein belongs to the calycin superfamily. Fatty-acid binding protein (FABP) family. In terms of assembly, monomer. In terms of tissue distribution, detected in spinal cord (at protein level).

The protein resides in the cytoplasm. In terms of biological role, may play a role in lipid transport protein in Schwann cells. May bind cholesterol. This is Myelin P2 protein (PMP2) from Equus caballus (Horse).